The following is a 1216-amino-acid chain: AF4/FMR2 family member 1 (1216 aa).

Disordered stretches follow at residues Met-1–Glu-52, Lys-68–Ser-104, Ile-116–Arg-139, Pro-152–Lys-217, Ala-244–Lys-275, and Ser-352–Gly-728. Composition is skewed to basic and acidic residues over residues Asn-9–Pro-35 and His-78–Gly-99. A compositionally biased stretch (basic and acidic residues) spans Arg-166–Leu-182. A phosphoserine mark is found at Ser-183, Ser-191, and Ser-197. Residues Ser-207–Lys-217 show a composition bias toward low complexity. The segment covering Pro-252–Pro-266 has biased composition (pro residues). Residues Pro-383–Ser-406 show a composition bias toward polar residues. The segment covering Leu-408–Gln-424 has biased composition (acidic residues). Residues Pro-429–Ala-438 show a composition bias toward pro residues. Acidic residues predominate over residues Glu-457–Pro-484. N6-acetyllysine is present on Lys-682. Over residues Ser-710–Gly-728 the composition is skewed to low complexity. Ser-755 and Ser-760 each carry phosphoserine. Disordered stretches follow at residues Arg-777–Ala-969 and Ala-1094–Ala-1125. Basic and acidic residues predominate over residues Arg-789–Ser-808. Low complexity-rich tracts occupy residues Lys-824–Thr-846, Pro-867–Pro-886, Pro-902–Asp-915, and Pro-1115–Ala-1125.

The protein belongs to the AF4 family. Component of the super elongation complex (SEC), at least composed of EAF1, EAF2, CDK9, MLLT3/AF9, AFF (AFF1 or AFF4), the P-TEFb complex and ELL (ELL, ELL2 or ELL3).

It localises to the nucleus. This Mus musculus (Mouse) protein is AF4/FMR2 family member 1 (Aff1).